Reading from the N-terminus, the 176-residue chain is Endoribonuclease YbeY (176 aa).

His-139, His-143, and His-149 together coordinate Zn(2+).

Belongs to the endoribonuclease YbeY family. The cofactor is Zn(2+).

The protein localises to the cytoplasm. Functionally, single strand-specific metallo-endoribonuclease involved in late-stage 70S ribosome quality control and in maturation of the 3' terminus of the 16S rRNA. In Acaryochloris marina (strain MBIC 11017), this protein is Endoribonuclease YbeY.